A 165-amino-acid chain; its full sequence is Putative pre-16S rRNA nuclease (165 aa).

It belongs to the YqgF nuclease family.

The protein localises to the cytoplasm. Functionally, could be a nuclease involved in processing of the 5'-end of pre-16S rRNA. The sequence is that of Putative pre-16S rRNA nuclease from Beijerinckia indica subsp. indica (strain ATCC 9039 / DSM 1715 / NCIMB 8712).